The following is a 471-amino-acid chain: 3-isopropylmalate dehydratase large subunit (471 aa).

Cys-347, Cys-407, and Cys-410 together coordinate [4Fe-4S] cluster.

This sequence belongs to the aconitase/IPM isomerase family. LeuC type 1 subfamily. As to quaternary structure, heterodimer of LeuC and LeuD. It depends on [4Fe-4S] cluster as a cofactor.

It catalyses the reaction (2R,3S)-3-isopropylmalate = (2S)-2-isopropylmalate. The protein operates within amino-acid biosynthesis; L-leucine biosynthesis; L-leucine from 3-methyl-2-oxobutanoate: step 2/4. Catalyzes the isomerization between 2-isopropylmalate and 3-isopropylmalate, via the formation of 2-isopropylmaleate. The sequence is that of 3-isopropylmalate dehydratase large subunit from Acaryochloris marina (strain MBIC 11017).